A 282-amino-acid chain; its full sequence is MSRQAATALSTGTSKCPPSQRVPALTDTTASNNDLASLFECPVCFDYVLPPILQCQSGHLVCSNCRPKLTCCPTCRGPLGSIRNLAVEKVANSVLFPCKYSASGCEITLPHTKKAEHEELCEFRPYSCPCPGASCKWQGSLDAVMPHLMHQHKSITTLQGEDIVFLATDINLPGAVDWVMMQSCFGFHFMLVLEKQEKYDGHQQFFAIVQLIGTRKQAENFAYRLELNGHRRRLTWEATPRSIHEGIATAIMNSDCLVFDTSIAQLFAENGNLGINVTISMC.

Residues 1 to 17 (MSRQAATALSTGTSKCP) are compositionally biased toward polar residues. The interval 1-23 (MSRQAATALSTGTSKCPPSQRVP) is disordered. Ser19 is subject to Phosphoserine; by ATM and ATR. Residues 41 to 76 (CPVCFDYVLPPILQCQSGHLVCSNCRPKLTCCPTCR) form an RING-type zinc finger. Residues 90-282 (VANSVLFPCK…LGINVTISMC (193 aa)) form an SBD region. An SIAH-type zinc finger spans residues 93–153 (SVLFPCKYSA…VMPHLMHQHK (61 aa)). 8 residues coordinate Zn(2+): Cys98, Cys105, His117, Cys121, Cys128, Cys135, His147, and His152.

Belongs to the SINA (Seven in absentia) family. Homodimer. Phosphorylated on Ser-19 by ATM and ATR. Widely expressed at low level in embryos and adults. Due to the high similarity between SIAH1A and SIAH1B, it is difficult to distinguish its own tissue specificity. Overexpressed in endothelial cells of adult lung.

It localises to the cytoplasm. It is found in the nucleus. The catalysed reaction is S-ubiquitinyl-[E2 ubiquitin-conjugating enzyme]-L-cysteine + [acceptor protein]-L-lysine = [E2 ubiquitin-conjugating enzyme]-L-cysteine + N(6)-ubiquitinyl-[acceptor protein]-L-lysine.. It participates in protein modification; protein ubiquitination. Its function is as follows. E3 ubiquitin-protein ligase that mediates ubiquitination and subsequent proteasomal degradation of target proteins. E3 ubiquitin ligases accept ubiquitin from an E2 ubiquitin-conjugating enzyme in the form of a thioester and then directly transfers the ubiquitin to targeted substrates. Mediates E3 ubiquitin ligase activity either through direct binding to substrates or by functioning as the essential RING domain subunit of larger E3 complexes. In Mus musculus (Mouse), this protein is E3 ubiquitin-protein ligase SIAH1B (Siah1b).